We begin with the raw amino-acid sequence, 436 residues long: L-threonine dehydratase biosynthetic IlvA (436 aa).

Positions 1-357 (MSETYVSEKS…HRGLKHYFLV (357 aa)) are catalytic. Lys-70 is subject to N6-(pyridoxal phosphate)lysine. Residues Asn-97, 203-207 (GGGGL), and Ser-329 contribute to the pyridoxal 5'-phosphate site. The region spanning 353–427 (HYFLVNFPQK…SAIDSRRLEP (75 aa)) is the ACT-like domain. Positions 358–436 (NFPQKPGQLR…PGTPEYEYLT (79 aa)) are regulatory.

The protein belongs to the serine/threonine dehydratase family. In terms of assembly, homotetramer. Pyridoxal 5'-phosphate serves as cofactor.

The enzyme catalyses L-threonine = 2-oxobutanoate + NH4(+). It functions in the pathway amino-acid biosynthesis; L-isoleucine biosynthesis; 2-oxobutanoate from L-threonine: step 1/1. Functionally, catalyzes the anaerobic formation of alpha-ketobutyrate and ammonia from threonine in a two-step reaction. The first step involved a dehydration of threonine and a production of enamine intermediates (aminocrotonate), which tautomerizes to its imine form (iminobutyrate). Both intermediates are unstable and short-lived. The second step is the nonenzymatic hydrolysis of the enamine/imine intermediates to form 2-ketobutyrate and free ammonia. In the low water environment of the cell, the second step is accelerated by RidA. The chain is L-threonine dehydratase biosynthetic IlvA (ilvA) from Corynebacterium glutamicum (strain ATCC 13032 / DSM 20300 / JCM 1318 / BCRC 11384 / CCUG 27702 / LMG 3730 / NBRC 12168 / NCIMB 10025 / NRRL B-2784 / 534).